A 269-amino-acid chain; its full sequence is JmjC domain-containing protein 8 (269 aa).

The signal sequence occupies residues 1 to 24 (MAAAGRRGLLLLFVLWMMVTVILP). Residues asparagine 135, asparagine 145, and asparagine 214 are each glycosylated (N-linked (GlcNAc...) asparagine). Residues 136-269 (DTLYFFGDNN…TSVFISTFLG (134 aa)) form the JmjC domain.

As to quaternary structure, oligomer. Dimer. Interacts with PKM; regulates angiogenesis and metabolism. In terms of processing, N-glycosylated.

The protein localises to the endoplasmic reticulum lumen. It is found in the cytoplasm. Functionally, functions as a positive regulator of TNF-induced NF-kappaB signaling. Regulates angiogenesis and cellular metabolism through interaction with PKM. The protein is JmjC domain-containing protein 8 of Mus musculus (Mouse).